The chain runs to 146 residues: Aminoglycoside N(6')-acetyltransferase type 1 (146 aa).

An N-acetyltransferase domain is found at 1-146; it reads MNIMPVSESL…RVVYFKKHIG (146 aa). Positions 22, 25, 66, and 79 each coordinate substrate. 81–83 serves as a coordination point for acetyl-CoA; that stretch reads IYV. Aspartate 115 contributes to the substrate binding site. Asparagine 120 contacts acetyl-CoA. Glutamate 136 contributes to the substrate binding site.

Homodimer.

It catalyses the reaction kanamycin B + acetyl-CoA = N(6')-acetylkanamycin B + CoA + H(+). In terms of biological role, catalyzes the transfer of an acetyl group from acetyl-CoA to the 6'-amino group of aminoglycoside molecules conferring resistance to antibiotics containing the purpurosamine ring including amikacin, kanamycin, tobramycin and netilmicin. The polypeptide is Aminoglycoside N(6')-acetyltransferase type 1 (Acinetobacter genomosp. 13).